The following is a 364-amino-acid chain: TD and POZ domain-containing protein 2 (364 aa).

The MATH domain maps to 19–149; the sequence is EFCYEWTISN…KDKLTLCCKV (131 aa). Residues 188 to 255 enclose the BTB domain; the sequence is TDCSLLVAGH…IYTGKAPTLH (68 aa).

It belongs to the Tdpoz family.

The polypeptide is TD and POZ domain-containing protein 2 (Mus musculus (Mouse)).